The primary structure comprises 481 residues: tRNA-guanine(15) transglycosylase (481 aa).

Residue aspartate 87 is the Nucleophile of the active site. Positions 122 and 191 each coordinate substrate. Zn(2+)-binding residues include cysteine 273, cysteine 275, and cysteine 278.

It belongs to the archaeosine tRNA-ribosyltransferase family. The cofactor is Zn(2+).

It catalyses the reaction guanosine(15) in tRNA + 7-cyano-7-deazaguanine = 7-cyano-7-carbaguanosine(15) in tRNA + guanine. It functions in the pathway tRNA modification; archaeosine-tRNA biosynthesis. Functionally, exchanges the guanine residue with 7-cyano-7-deazaguanine (preQ0) at position 15 in the dihydrouridine loop (D-loop) of archaeal tRNAs. The sequence is that of tRNA-guanine(15) transglycosylase from Archaeoglobus fulgidus (strain ATCC 49558 / DSM 4304 / JCM 9628 / NBRC 100126 / VC-16).